A 262-amino-acid polypeptide reads, in one-letter code: Type II restriction enzyme MspI (262 aa).

It carries out the reaction Endonucleolytic cleavage of DNA to give specific double-stranded fragments with terminal 5'-phosphates.. Its function is as follows. A P subtype restriction enzyme that recognizes the double-stranded sequence 5'-CCGG-3' and cleaves after C-1. The chain is Type II restriction enzyme MspI (mspIR) from Moraxella sp.